We begin with the raw amino-acid sequence, 431 residues long: MATLSVDLEVQAQATRAAARQLAQWSGADRQRLLSAIATTLEQEAPRILAANQADCEAATTEGIAPALYARLKLDADKLAAAIAGVRDLAQLPDPLGQIQIDRELDEGLILQRLTCPVGVLGVIFEARPDAVIQIASLAIKSGNGAILKGGREAICSCQAIVAAIAQALAEQQAPVEAIRLLTSREETLALLKLDRYVDLIIPRGSNSFVRFVQDNTHIPVLGHADGICHLYVDQAAAIEKTVTITVDAKTQYPAACNAIETLLIHEAIAPQFLPVVAAALHEKGVSLRGDAAAQTIVPMEAATEEDWRTEYSDLVLAVRLVPSLDAAIAHINEYGSGHTDAIATEDAAAAAQFFSQVDSAGVYHNCSTRFADGFRYGFGAEVGISTQKLPPRGPVGLEGLVTYKYVLSGDGQIAATYSGAQAKPFLHRDR.

This sequence belongs to the gamma-glutamyl phosphate reductase family.

Its subcellular location is the cytoplasm. It catalyses the reaction L-glutamate 5-semialdehyde + phosphate + NADP(+) = L-glutamyl 5-phosphate + NADPH + H(+). It participates in amino-acid biosynthesis; L-proline biosynthesis; L-glutamate 5-semialdehyde from L-glutamate: step 2/2. In terms of biological role, catalyzes the NADPH-dependent reduction of L-glutamate 5-phosphate into L-glutamate 5-semialdehyde and phosphate. The product spontaneously undergoes cyclization to form 1-pyrroline-5-carboxylate. The protein is Gamma-glutamyl phosphate reductase of Synechococcus elongatus (strain ATCC 33912 / PCC 7942 / FACHB-805) (Anacystis nidulans R2).